The primary structure comprises 270 residues: Sec-independent protein translocase protein TatC (270 aa).

A run of 6 helical transmembrane segments spans residues 35-55 (LILS…YRVQ), 93-113 (AFWA…WAFI), 124-144 (WGLP…VFGY), 176-196 (VVTF…AVIL), 209-229 (QGWR…TPTP), and 231-251 (PANM…GVVL).

The protein belongs to the TatC family. Forms a complex with TatA.

The protein resides in the cell membrane. Part of the twin-arginine translocation (Tat) system that transports large folded proteins containing a characteristic twin-arginine motif in their signal peptide across membranes. In Deinococcus radiodurans (strain ATCC 13939 / DSM 20539 / JCM 16871 / CCUG 27074 / LMG 4051 / NBRC 15346 / NCIMB 9279 / VKM B-1422 / R1), this protein is Sec-independent protein translocase protein TatC.